We begin with the raw amino-acid sequence, 248 residues long: E3 ubiquitin-protein ligase BIG BROTHER (248 aa).

The RING-type; atypical zinc finger occupies 197–238 (CVICQLKYKIGERQMNLPCKHVYHSECISKWLSINKVCPVCN).

In terms of assembly, interacts with the E2 ubiquitin conjugating enzyme UBC10 via the RING domain. Interacts with DA1. Post-translationally, auto-ubiquitinated. In terms of tissue distribution, mostly expressed in inflorescence, and, to a lower extent, in seedlings, roots, stems, leaves and siliques.

The catalysed reaction is S-ubiquitinyl-[E2 ubiquitin-conjugating enzyme]-L-cysteine + [acceptor protein]-L-lysine = [E2 ubiquitin-conjugating enzyme]-L-cysteine + N(6)-ubiquitinyl-[acceptor protein]-L-lysine.. The protein operates within protein modification; protein ubiquitination. Its function is as follows. E3 ubiquitin-protein ligase that limits organ size, and possibly seed size, in a dose-dependent manner. Negatively regulates the duration of cell proliferation in leaves and petals independently of the major phytohormones (e.g. auxin, cytokinin, gibberellin, brassinosteroids, ethylene, abscisic acid, jasmonic acid), probably by targeting growth stimulators for degradation. Limits the proliferation of root meristematic cells. Polyubiquitinates DA1. Involved in the promotion of leaf senescence, in addition to its function in restricting plant growth. Possesses E3 ubiquitin-protein ligase activity in vitro. This Arabidopsis thaliana (Mouse-ear cress) protein is E3 ubiquitin-protein ligase BIG BROTHER (BB).